A 244-amino-acid polypeptide reads, in one-letter code: tRNA pseudouridine synthase A (244 aa).

Residue Asp-52 is the Nucleophile of the active site. Tyr-110 contributes to the substrate binding site.

The protein belongs to the tRNA pseudouridine synthase TruA family. In terms of assembly, homodimer.

The enzyme catalyses uridine(38/39/40) in tRNA = pseudouridine(38/39/40) in tRNA. Formation of pseudouridine at positions 38, 39 and 40 in the anticodon stem and loop of transfer RNAs. This Finegoldia magna (strain ATCC 29328 / DSM 20472 / WAL 2508) (Peptostreptococcus magnus) protein is tRNA pseudouridine synthase A.